Here is a 145-residue protein sequence, read N- to C-terminus: uncharacterized protein (145 aa).

Transmembrane regions (helical) follow at residues 1 to 21 (MELF…YFLI), 28 to 48 (TVLI…MGAL), 54 to 74 (SMTS…AYVM), and 96 to 116 (FFLI…IPSA).

Belongs to the DcuC/DcuD transporter (TC 2.A.61) family.

The protein resides in the cell membrane. This is an uncharacterized protein from Haemophilus influenzae (strain ATCC 51907 / DSM 11121 / KW20 / Rd).